We begin with the raw amino-acid sequence, 283 residues long: Tumor necrosis factor receptor superfamily member 14 (283 aa).

Residues 1–38 form the signal peptide; that stretch reads MEPPGDWGPPPWRSTPKTDVLRLVLYLTFLGAPCYAPA. Over 39–202 the chain is Extracellular; sequence LPSCKEDEYP…GAGTSSSHWV (164 aa). 8 cysteine pairs are disulfide-bonded: Cys-42–Cys-53, Cys-54–Cys-67, Cys-57–Cys-75, Cys-78–Cys-93, Cys-96–Cys-111, Cys-99–Cys-119, Cys-121–Cys-138, and Cys-127–Cys-135. TNFR-Cys repeat units follow at residues 42-75, 78-119, and 121-162; these read CKED…GTVC, CPPG…NAVC, and CSPG…DTLC. Asn-110 is a glycosylation site (N-linked (GlcNAc...) asparagine). N-linked (GlcNAc...) asparagine glycosylation is present at Asn-173. Residues 203-223 traverse the membrane as a helical segment; the sequence is WWFLSGSLVIVIVCSTVGLII. Residues 224–283 are Cytoplasmic-facing; sequence CVKRRKPRGDVVKVIVSVQRKRQEAEGEATVIEALQAPPDVTTVAVEETIPSFTGRSPNH. Position 240 is a phosphoserine (Ser-240).

The protein belongs to the tumor necrosis factor receptor superfamily. In terms of assembly, interacts with TRAF2, TRAF3 and TRAF5. Interacts (via CRD1/TNFR-Cys 1) with CD160; this interaction is direct. Interacts with LTA and TNFSF14. Interacts (via CRD1/TNFR-Cys 1) in cis and trans with BTLA; the cis interactions inhibits the trans interactions. As to quaternary structure, (Microbial infection) Interacts with herpes simplex virus 1/HHV-1 envelope glycoprotein D. (Microbial infection) Interacts with herpes simplex virus 2/HHV-2 envelope glycoprotein D. Post-translationally, N-glycosylated. As to expression, widely expressed, with the highest expression in lung, spleen and thymus. Expressed in a subpopulation of B cells and monocytes. Expressed in naive T cells.

It is found in the cell membrane. Its function is as follows. Receptor for four distinct ligands: The TNF superfamily members TNFSF14/LIGHT and homotrimeric LTA/lymphotoxin-alpha and the immunoglobulin superfamily members BTLA and CD160, altogether defining a complex stimulatory and inhibitory signaling network. Signals via the TRAF2-TRAF3 E3 ligase pathway to promote immune cell survival and differentiation. Participates in bidirectional cell-cell contact signaling between antigen presenting cells and lymphocytes. In response to ligation of TNFSF14/LIGHT, delivers costimulatory signals to T cells, promoting cell proliferation and effector functions. Interacts with CD160 on NK cells, enhancing IFNG production and anti-tumor immune response. In the context of bacterial infection, acts as a signaling receptor on epithelial cells for CD160 from intraepithelial lymphocytes, triggering the production of antimicrobial proteins and pro-inflammatory cytokines. Upon binding to CD160 on activated CD4+ T cells, down-regulates CD28 costimulatory signaling, restricting memory and alloantigen-specific immune response. May interact in cis (on the same cell) or in trans (on other cells) with BTLA. In cis interactions, appears to play an immune regulatory role inhibiting in trans interactions in naive T cells to maintain a resting state. In trans interactions, can predominate during adaptive immune response to provide survival signals to effector T cells. In terms of biological role, (Microbial infection) Acts as a receptor for Herpes simplex virus 1/HHV-1. (Microbial infection) Acts as a receptor for Herpes simplex virus 2/HHV-2. The polypeptide is Tumor necrosis factor receptor superfamily member 14 (Homo sapiens (Human)).